We begin with the raw amino-acid sequence, 163 residues long: uncharacterized protein (163 aa).

4 consecutive transmembrane segments (helical) span residues 19-39, 63-83, 87-107, and 119-139; these read GPPS…SEGI, FFAD…LLGL, VAAV…KLRA, and FWGM…LIFL.

The protein belongs to the DoxX family.

Its subcellular location is the cell membrane. This is an uncharacterized protein from Mycobacterium tuberculosis (strain ATCC 25618 / H37Rv).